A 134-amino-acid chain; its full sequence is Large ribosomal subunit protein bL21 (134 aa).

The protein belongs to the bacterial ribosomal protein bL21 family. As to quaternary structure, part of the 50S ribosomal subunit. Contacts protein L20.

In terms of biological role, this protein binds to 23S rRNA in the presence of protein L20. In Pelagibacter ubique (strain HTCC1062), this protein is Large ribosomal subunit protein bL21.